The following is a 276-amino-acid chain: Urease accessory protein UreD (276 aa).

This sequence belongs to the UreD family. As to quaternary structure, ureD, UreF and UreG form a complex that acts as a GTP-hydrolysis-dependent molecular chaperone, activating the urease apoprotein by helping to assemble the nickel containing metallocenter of UreC. The UreE protein probably delivers the nickel.

It is found in the cytoplasm. Functionally, required for maturation of urease via the functional incorporation of the urease nickel metallocenter. The chain is Urease accessory protein UreD from Variovorax paradoxus (strain S110).